Here is a 418-residue protein sequence, read N- to C-terminus: 4-hydroxy-3-methylbut-2-en-1-yl diphosphate synthase (flavodoxin) (418 aa).

[4Fe-4S] cluster is bound by residues C305, C308, C351, and E358.

Belongs to the IspG family. Requires [4Fe-4S] cluster as cofactor.

It catalyses the reaction (2E)-4-hydroxy-3-methylbut-2-enyl diphosphate + oxidized [flavodoxin] + H2O + 2 H(+) = 2-C-methyl-D-erythritol 2,4-cyclic diphosphate + reduced [flavodoxin]. It functions in the pathway isoprenoid biosynthesis; isopentenyl diphosphate biosynthesis via DXP pathway; isopentenyl diphosphate from 1-deoxy-D-xylulose 5-phosphate: step 5/6. Its function is as follows. Converts 2C-methyl-D-erythritol 2,4-cyclodiphosphate (ME-2,4cPP) into 1-hydroxy-2-methyl-2-(E)-butenyl 4-diphosphate. This is 4-hydroxy-3-methylbut-2-en-1-yl diphosphate synthase (flavodoxin) from Bartonella bacilliformis (strain ATCC 35685 / KC583 / Herrer 020/F12,63).